We begin with the raw amino-acid sequence, 132 residues long: Sec-independent protein translocase protein TatB (132 aa).

A helical transmembrane segment spans residues 2–22; it reads FDGIGFMELLLIGILGLVVLG. Positions 86–132 are disordered; sequence LKSAAQSVNRPYKVEDISPASSSAPVDPAPTETKTAETSANSEKPNG. Residues 103–115 are compositionally biased toward low complexity; it reads SPASSSAPVDPAP. A compositionally biased stretch (polar residues) spans 117–132; it reads ETKTAETSANSEKPNG.

Belongs to the TatB family. The Tat system comprises two distinct complexes: a TatABC complex, containing multiple copies of TatA, TatB and TatC subunits, and a separate TatA complex, containing only TatA subunits. Substrates initially bind to the TatABC complex, which probably triggers association of the separate TatA complex to form the active translocon.

The protein resides in the cell inner membrane. In terms of biological role, part of the twin-arginine translocation (Tat) system that transports large folded proteins containing a characteristic twin-arginine motif in their signal peptide across membranes. Together with TatC, TatB is part of a receptor directly interacting with Tat signal peptides. TatB may form an oligomeric binding site that transiently accommodates folded Tat precursor proteins before their translocation. The chain is Sec-independent protein translocase protein TatB from Shewanella sediminis (strain HAW-EB3).